The sequence spans 400 residues: Lysophospholipid transporter LplT (400 aa).

12 helical membrane passes run 19-39 (VIVA…ATLA), 53-73 (VLQM…GQIA), 91-111 (AGAA…LVGI), 139-159 (LMEA…GVLA), 164-184 (IAAL…NLFI), 195-213 (SWRL…VVLW), 227-247 (LFWG…PVAL), 257-277 (YLNA…AKLV), 281-301 (TVSR…IFSL), 304-324 (ALLP…FFVV), 352-372 (NSAM…GVPA), and 373-393 (VAIG…LWIW).

This sequence belongs to the major facilitator superfamily. LplT (TC 2.A.1.42) family.

Its subcellular location is the cell inner membrane. Its function is as follows. Catalyzes the facilitated diffusion of 2-acyl-glycero-3-phosphoethanolamine (2-acyl-GPE) into the cell. The chain is Lysophospholipid transporter LplT from Salmonella typhi.